Reading from the N-terminus, the 146-residue chain is uncharacterized protein (146 aa).

Positions 86 to 96 (EFDSPMDEEEE) are enriched in acidic residues. Residues 86 to 124 (EFDSPMDEEEETKPREASLDQTAPKKSKKEELLVKNNNF) form a disordered region.

This is an uncharacterized protein from Ostreid herpesvirus 1 (isolate France) (OsHV-1).